A 115-amino-acid polypeptide reads, in one-letter code: Type 3 secretion system chaperone YscG (115 aa).

The protein belongs to the YscG family. Component of the heterodimeric YscE-YscG chaperone. The YscE-YscG chaperone forms a stable ternary complex with YscF/SctF.

It is found in the cytoplasm. In terms of biological role, chaperone of the type III secretion system (T3SS), also called injectisome, which is used to inject bacterial effector proteins into eukaryotic host cells. Along with YscE, prevents premature polymerization of the YscF/SctF needle protein within the cytoplasm. Required for Yop secretion. This Yersinia enterocolitica protein is Type 3 secretion system chaperone YscG.